The primary structure comprises 261 residues: Potassium/proton antiporter CemA (261 aa).

3 consecutive transmembrane segments (helical) span residues 138 to 158 (IISHLLANLIGLVLLSVCLIL), 186 to 206 (ILLVTDLCIGFHSPHGWELMI), and 221 to 241 (IISGLVSTFPVILDTIFKYWI).

The protein belongs to the CemA family.

The protein resides in the plastid. It localises to the chloroplast inner membrane. The enzyme catalyses K(+)(in) + H(+)(out) = K(+)(out) + H(+)(in). Contributes to K(+)/H(+) antiport activity by supporting proton efflux to control proton extrusion and homeostasis in chloroplasts in a light-dependent manner to modulate photosynthesis. Prevents excessive induction of non-photochemical quenching (NPQ) under continuous-light conditions. Indirectly promotes efficient inorganic carbon uptake into chloroplasts. This Cryptomeria japonica (Japanese cedar) protein is Potassium/proton antiporter CemA.